Here is a 490-residue protein sequence, read N- to C-terminus: Dual specificity protein kinase CLK3 (490 aa).

The disordered stretch occupies residues 1–138; the sequence is MHHCKRYRSP…SKRSSRSVED (138 aa). Y7 carries the post-translational modification Phosphotyrosine. A phosphoserine mark is found at S9, S49, S51, S67, S76, and S78. Basic and acidic residues-rich tracts occupy residues 26–56 and 63–76; these read YSRE…DRIP and EHRD…EERS. Residues 88–116 show a composition bias toward basic residues; sequence RSRHRRRSRERGPYRTRKHAHHCHKRRTR. Residues 117–130 show a composition bias toward low complexity; it reads SCSSASSRSQQSSK. At S135 the chain carries Phosphoserine. Positions 156-472 constitute a Protein kinase domain; the sequence is YEIVGNLGEG…LAEALLHPFF (317 aa). ATP is bound by residues 162–170 and K186; that span reads LGEGTFGKV. D283 (proton acceptor) is an active-site residue.

This sequence belongs to the protein kinase superfamily. CMGC Ser/Thr protein kinase family. Lammer subfamily. Autophosphorylates on all three types of residues.

The protein localises to the nucleus. It is found in the cytoplasm. The protein resides in the cytoplasmic vesicle. It localises to the secretory vesicle. Its subcellular location is the acrosome. The catalysed reaction is L-seryl-[protein] + ATP = O-phospho-L-seryl-[protein] + ADP + H(+). The enzyme catalyses L-threonyl-[protein] + ATP = O-phospho-L-threonyl-[protein] + ADP + H(+). It carries out the reaction L-tyrosyl-[protein] + ATP = O-phospho-L-tyrosyl-[protein] + ADP + H(+). Leucettine L41 inhibits its kinase activity and affects the regulation of alternative splicing mediated by phosphorylation of SR proteins. Its function is as follows. Dual specificity kinase acting on both serine/threonine and tyrosine-containing substrates. Phosphorylates serine- and arginine-rich (SR) proteins of the spliceosomal complex. May be a constituent of a network of regulatory mechanisms that enable SR proteins to control RNA splicing and can cause redistribution of SR proteins from speckles to a diffuse nucleoplasmic distribution. Phosphorylates SRSF1 and SRSF3. Regulates the alternative splicing of tissue factor (F3) pre-mRNA in endothelial cells. The chain is Dual specificity protein kinase CLK3 (Clk3) from Rattus norvegicus (Rat).